Reading from the N-terminus, the 151-residue chain is UPF0208 membrane protein YfbV (151 aa).

A run of 2 helical transmembrane segments spans residues 46-65 (YAIRFMPPIAVFTLCWQIAL) and 69-91 (LGPAVATALFALSLPMQGLWWLG).

Belongs to the UPF0208 family.

It localises to the cell inner membrane. This Shigella boydii serotype 18 (strain CDC 3083-94 / BS512) protein is UPF0208 membrane protein YfbV.